A 259-amino-acid polypeptide reads, in one-letter code: NAD kinase (259 aa).

The active-site Proton acceptor is the aspartate 43. NAD(+)-binding positions include 43 to 44 (DG), 111 to 112 (NE), and arginine 136.

Belongs to the NAD kinase family. A divalent metal cation serves as cofactor.

It localises to the cytoplasm. It carries out the reaction NAD(+) + ATP = ADP + NADP(+) + H(+). Its function is as follows. Involved in the regulation of the intracellular balance of NAD and NADP, and is a key enzyme in the biosynthesis of NADP. Catalyzes specifically the phosphorylation on 2'-hydroxyl of the adenosine moiety of NAD to yield NADP. The protein is NAD kinase of Mycoplasma pneumoniae (strain ATCC 29342 / M129 / Subtype 1) (Mycoplasmoides pneumoniae).